The sequence spans 213 residues: MAYTLPELGYAYDALEPHFDAKTMEIHHSKHHQAYINNANAALEAHPELLEKCPGALIKDLSQVPAEKRIAVRNNVGGHVNHTLFWKGLKTGTTLQGALKEAIERDFGSVEAFQSEFEKAATTRVGSGWAWLVLEEGKLAVVSTANQDNPLMGKEVAGVSGYPILVLDVWEHAYYLNYQNRRPDFIKAFWNVVNWDEAARRFEEKVATCGCAK.

Mn(2+) is bound by residues His27, His82, Asp168, and His172.

The protein belongs to the iron/manganese superoxide dismutase family. Homodimer. It depends on Mn(2+) as a cofactor.

It catalyses the reaction 2 superoxide + 2 H(+) = H2O2 + O2. Functionally, destroys superoxide anion radicals which are normally produced within the cells and which are toxic to biological systems. The protein is Superoxide dismutase [Mn] (sodA) of Mannheimia haemolytica (Pasteurella haemolytica).